The primary structure comprises 876 residues: Alanine--tRNA ligase (876 aa).

Residues His562, His566, Cys666, and His670 each coordinate Zn(2+).

Belongs to the class-II aminoacyl-tRNA synthetase family. Requires Zn(2+) as cofactor.

The protein resides in the cytoplasm. It carries out the reaction tRNA(Ala) + L-alanine + ATP = L-alanyl-tRNA(Ala) + AMP + diphosphate. Catalyzes the attachment of alanine to tRNA(Ala) in a two-step reaction: alanine is first activated by ATP to form Ala-AMP and then transferred to the acceptor end of tRNA(Ala). Also edits incorrectly charged Ser-tRNA(Ala) and Gly-tRNA(Ala) via its editing domain. The protein is Alanine--tRNA ligase of Marinobacter nauticus (strain ATCC 700491 / DSM 11845 / VT8) (Marinobacter aquaeolei).